The following is a 716-amino-acid chain: Leucine-rich repeat neuronal protein 1 (716 aa).

Residues 1 to 25 (MARMSFVIAACQLVLGLLMTSLTES) form the signal peptide. The LRRNT domain maps to 26 to 72 (SIQNSECPQLCVCEIRPWFTPQSTYREATTVDCNDLRLTRIPSNLSS). Residues 26-631 (SIQNSECPQL…DISDQETSTA (606 aa)) are Extracellular-facing. 11 LRR repeats span residues 73-95 (DTQV…QQLF), 96-117 (NLTE…GLAN), 120-141 (QLTT…CLQD), 144-165 (NLQE…AFAG), 168-189 (NLLR…WFDS), 192-213 (NLEI…NFKP), 216-237 (NLRS…ALVG), 240-261 (SLES…ALQK), 264-285 (NLKF…DFKN), 313-335 (ELTK…AFRS), and 338-359 (ALES…TVES). 2 N-linked (GlcNAc...) asparagine glycosylation sites follow: N96 and N117. One can recognise an LRRCT domain in the interval 371–424 (NPLRCDCVIHWINSNKTNIRFMEPLSMFCAMPPEYKGHQVKEVLIQDSSEQCLP). N385 carries an N-linked (GlcNAc...) asparagine glycan. Positions 424 to 515 (PMISHDSFPN…GADTRVATIK (92 aa)) constitute an Ig-like C2-type domain. Cysteines 447 and 499 form a disulfide. A glycan (N-linked (GlcNAc...) asparagine) is linked at N517. One can recognise a Fibronectin type-III domain in the interval 525–617 (QVLKIYVKQT…SCVNVTTKNA (93 aa)). Residues 632 to 652 (LAAVMGSMFAVISLASIAVYF) traverse the membrane as a helical segment. Over 653 to 716 (AKRFKRKNYH…VDTSRSYYMW (64 aa)) the chain is Cytoplasmic. Basic and acidic residues predominate over residues 691-700 (DSEKDKDGSA). Residues 691 to 716 (DSEKDKDGSADTKPTQVDTSRSYYMW) are disordered. The segment covering 702–716 (TKPTQVDTSRSYYMW) has biased composition (polar residues).

It localises to the membrane. The protein is Leucine-rich repeat neuronal protein 1 (LRRN1) of Homo sapiens (Human).